The primary structure comprises 360 residues: DNA replication and repair protein RecF (360 aa).

Residue 30–37 (GHNGSGKT) participates in ATP binding.

Belongs to the RecF family.

It is found in the cytoplasm. Its function is as follows. The RecF protein is involved in DNA metabolism; it is required for DNA replication and normal SOS inducibility. RecF binds preferentially to single-stranded, linear DNA. It also seems to bind ATP. This chain is DNA replication and repair protein RecF, found in Haemophilus ducreyi (strain 35000HP / ATCC 700724).